Reading from the N-terminus, the 313-residue chain is Carbamate kinase 2 (313 aa).

This sequence belongs to the carbamate kinase family.

The protein resides in the cytoplasm. The catalysed reaction is hydrogencarbonate + NH4(+) + ATP = carbamoyl phosphate + ADP + H2O + H(+). The protein operates within metabolic intermediate metabolism; carbamoyl phosphate degradation; CO(2) and NH(3) from carbamoyl phosphate: step 1/1. In Staphylococcus aureus (strain USA300), this protein is Carbamate kinase 2 (arcC2).